Here is a 72-residue protein sequence, read N- to C-terminus: Large ribosomal subunit protein bL32c (72 aa).

The segment at 49–72 (PPAPVSENWDDEAKGFGKDLDAAE) is disordered. A compositionally biased stretch (basic and acidic residues) spans 59–72 (DEAKGFGKDLDAAE).

Belongs to the bacterial ribosomal protein bL32 family.

It localises to the plastid. The protein localises to the chloroplast. This is Large ribosomal subunit protein bL32c from Ostreococcus tauri.